The primary structure comprises 90 residues: Guanine nucleotide-binding protein subunit gamma (90 aa).

Cys-86 carries S-palmitoyl cysteine lipidation. A Cysteine methyl ester modification is found at Cys-87. Cys-87 carries S-farnesyl cysteine lipidation. A propeptide spans 88-90 (removed in mature form); that stretch reads TIM.

Belongs to the G protein gamma family. As to quaternary structure, g proteins are composed of 3 units, alpha, beta and gamma.

It is found in the membrane. In Kluyveromyces lactis (strain ATCC 8585 / CBS 2359 / DSM 70799 / NBRC 1267 / NRRL Y-1140 / WM37) (Yeast), this protein is Guanine nucleotide-binding protein subunit gamma.